Here is a 398-residue protein sequence, read N- to C-terminus: Nocardicin C N-oxygenase (398 aa).

Residues 63–90 (RARAAGREETPRVTPEAAPAGSMLSMDP) form a disordered region. 5 residues coordinate heme: His-93, Arg-97, Arg-289, His-345, and Cys-347.

The protein belongs to the cytochrome P450 family. It depends on heme as a cofactor.

It catalyses the reaction nocardicin C + 4 reduced [2Fe-2S]-[ferredoxin] + 2 O2 + 2 H(+) = nocardicin A + 4 oxidized [2Fe-2S]-[ferredoxin] + 3 H2O. It participates in antibiotic biosynthesis. Its function is as follows. Involved in the biosynthesis of the beta-lactam antibiotic nocardicin A. Catalyzes the conversion of nocardicin C to nocardicin A. Cannot use nocardicin G. This is Nocardicin C N-oxygenase from Nocardia uniformis subsp. tsuyamanensis.